A 372-amino-acid chain; its full sequence is Tetraacyldisaccharide 4'-kinase (372 aa).

65 to 72 contributes to the ATP binding site; it reads TVGGTGKT. The disordered stretch occupies residues 351-372; that stretch reads QSTATGMADGLDKEHQDGQPAA. Positions 360 to 372 are enriched in basic and acidic residues; the sequence is GLDKEHQDGQPAA.

It belongs to the LpxK family.

It catalyses the reaction a lipid A disaccharide + ATP = a lipid IVA + ADP + H(+). The protein operates within glycolipid biosynthesis; lipid IV(A) biosynthesis; lipid IV(A) from (3R)-3-hydroxytetradecanoyl-[acyl-carrier-protein] and UDP-N-acetyl-alpha-D-glucosamine: step 6/6. Its function is as follows. Transfers the gamma-phosphate of ATP to the 4'-position of a tetraacyldisaccharide 1-phosphate intermediate (termed DS-1-P) to form tetraacyldisaccharide 1,4'-bis-phosphate (lipid IVA). The polypeptide is Tetraacyldisaccharide 4'-kinase (Cupriavidus metallidurans (strain ATCC 43123 / DSM 2839 / NBRC 102507 / CH34) (Ralstonia metallidurans)).